The sequence spans 737 residues: Catalase-peroxidase (737 aa).

The disordered stretch occupies residues 1–32 (MSKENMSNEGKCPFNHGAAGTNQSSGRGTSNK). Residues 20–32 (GTNQSSGRGTSNK) show a composition bias toward polar residues. A cross-link (tryptophyl-tyrosyl-methioninium (Trp-Tyr) (with M-252)) is located at residues 103–226 (WHSAGTYRTA…LAAVQMGLIY (124 aa)). The active-site Proton acceptor is H104. Positions 226-252 (YVNPEGPEGKPDTLASARDIRDTFGRM) form a cross-link, tryptophyl-tyrosyl-methioninium (Tyr-Met) (with W-103). H267 is a binding site for heme b.

Belongs to the peroxidase family. Peroxidase/catalase subfamily. As to quaternary structure, homodimer or homotetramer. Heme b is required as a cofactor. In terms of processing, formation of the three residue Trp-Tyr-Met cross-link is important for the catalase, but not the peroxidase activity of the enzyme.

It catalyses the reaction H2O2 + AH2 = A + 2 H2O. The enzyme catalyses 2 H2O2 = O2 + 2 H2O. In terms of biological role, bifunctional enzyme with both catalase and broad-spectrum peroxidase activity. This is Catalase-peroxidase from Marinomonas sp. (strain MWYL1).